Consider the following 120-residue polypeptide: Large ribosomal subunit protein uL18 (120 aa).

The protein belongs to the universal ribosomal protein uL18 family. As to quaternary structure, part of the 50S ribosomal subunit; part of the 5S rRNA/L5/L18/L25 subcomplex. Contacts the 5S and 23S rRNAs.

In terms of biological role, this is one of the proteins that bind and probably mediate the attachment of the 5S RNA into the large ribosomal subunit, where it forms part of the central protuberance. The polypeptide is Large ribosomal subunit protein uL18 (Ehrlichia ruminantium (strain Gardel)).